A 170-amino-acid polypeptide reads, in one-letter code: MKSIQVPIILVGFMGTGKTTVGKYLSDLYNLSYVDLDNFIEVNECKSIPNIFNDIGEKGFRSLETRYLKSCLNTFDIISTGGGIIEDTNSLKLLKNQKHVVWLDCDIEIIFKRVKNDSHRPNAKSKNLNQLDALYSSRLSRYNEIAFMKVDSAQSVSEICTLIKTKLLSD.

ATP is bound at residue 15–20 (GTGKTT). Mg(2+) is bound at residue Thr19. Asp37, Arg61, and Gly82 together coordinate substrate. Arg120 is an ATP binding site. Residue Arg138 coordinates substrate. An ATP-binding site is contributed by Gln154.

The protein belongs to the shikimate kinase family. In terms of assembly, monomer. Requires Mg(2+) as cofactor.

Its subcellular location is the cytoplasm. The catalysed reaction is shikimate + ATP = 3-phosphoshikimate + ADP + H(+). It participates in metabolic intermediate biosynthesis; chorismate biosynthesis; chorismate from D-erythrose 4-phosphate and phosphoenolpyruvate: step 5/7. In terms of biological role, catalyzes the specific phosphorylation of the 3-hydroxyl group of shikimic acid using ATP as a cosubstrate. The sequence is that of Shikimate kinase from Staphylococcus epidermidis (strain ATCC 35984 / DSM 28319 / BCRC 17069 / CCUG 31568 / BM 3577 / RP62A).